Reading from the N-terminus, the 640-residue chain is Threonine--tRNA ligase (640 aa).

Residues 1–59 (MKIKVKLPDGKEKEYDRGITPAEIAKELGVKKAIGAVVNGELWDLKRPIENDCELRLVT) enclose the TGS domain. The catalytic stretch occupies residues 240 to 531 (DHRKLGPHLE…LIEHFAGAFP (292 aa)). The Zn(2+) site is built by C332, H383, and H508.

It belongs to the class-II aminoacyl-tRNA synthetase family. Homodimer. Requires Zn(2+) as cofactor.

It is found in the cytoplasm. The enzyme catalyses tRNA(Thr) + L-threonine + ATP = L-threonyl-tRNA(Thr) + AMP + diphosphate + H(+). Its function is as follows. Catalyzes the attachment of threonine to tRNA(Thr) in a two-step reaction: L-threonine is first activated by ATP to form Thr-AMP and then transferred to the acceptor end of tRNA(Thr). Also edits incorrectly charged L-seryl-tRNA(Thr). This is Threonine--tRNA ligase from Thermotoga sp. (strain RQ2).